Consider the following 226-residue polypeptide: MNRKIIAIIPASGIGSRMNAALPKQYLTLQGKTILEHTVAIFLNHPQIDKIVIALSANDQHHQHISLLTSDKIQLVNGGASRAESVFNALQSIDEHSWALVHDAARPCLKRSDLDKLLQITDQNGAILASPVVDTLKRAEGNKISHTEDRTTLWHALTPQFFPTALLKQALQQAFDRQQNVTDEASAMELAGYQPTLITGSNSNLKITRPEDLALAEFYLMHSLEK.

It belongs to the IspD/TarI cytidylyltransferase family. IspD subfamily.

The catalysed reaction is 2-C-methyl-D-erythritol 4-phosphate + CTP + H(+) = 4-CDP-2-C-methyl-D-erythritol + diphosphate. It functions in the pathway isoprenoid biosynthesis; isopentenyl diphosphate biosynthesis via DXP pathway; isopentenyl diphosphate from 1-deoxy-D-xylulose 5-phosphate: step 2/6. Catalyzes the formation of 4-diphosphocytidyl-2-C-methyl-D-erythritol from CTP and 2-C-methyl-D-erythritol 4-phosphate (MEP). This Haemophilus ducreyi (strain 35000HP / ATCC 700724) protein is 2-C-methyl-D-erythritol 4-phosphate cytidylyltransferase.